A 520-amino-acid polypeptide reads, in one-letter code: Laccase-1 (520 aa).

A signal peptide spans 1–19 (MRLSNALVLVAACISSVVA). Plastocyanin-like domains follow at residues 21 to 145 (TRTF…FIVY), 157 to 305 (VDDE…LTLA), and 375 to 488 (TVPV…FAEA). The Cu cation site is built by H82 and H84. 2 disulfide bridges follow: C103–C509 and C135–C229. N108 carries N-linked (GlcNAc...) asparagine glycosylation. 2 residues coordinate Cu cation: H127 and H129. N-linked (GlcNAc...) asparagine glycosylation is found at N239 and N299. Residues H417, H420, H422, H470, C471, H472, and H476 each coordinate Cu cation. An N-linked (GlcNAc...) asparagine glycan is attached at N492.

It belongs to the multicopper oxidase family. It depends on Cu cation as a cofactor.

The protein resides in the secreted. It catalyses the reaction 4 hydroquinone + O2 = 4 benzosemiquinone + 2 H2O. Its function is as follows. Lignin degradation and detoxification of lignin-derived products. This chain is Laccase-1 (lcc1), found in Agaricus bisporus (White button mushroom).